Here is a 62-residue protein sequence, read N- to C-terminus: Ribulose bisphosphate carboxylase/oxygenase activase, chloroplastic (62 aa).

Belongs to the RuBisCO activase family.

The protein localises to the plastid. The protein resides in the chloroplast stroma. Functionally, activation of RuBisCO (ribulose-1,5-bisphosphate carboxylase/oxygenase; EC 4.1.1.39) involves the ATP-dependent carboxylation of the epsilon-amino group of lysine leading to a carbamate structure. In Vitis sp. (Grape), this protein is Ribulose bisphosphate carboxylase/oxygenase activase, chloroplastic.